The sequence spans 108 residues: Ig kappa chain V-V region HP 123E6 (108 aa).

The tract at residues 1–23 is framework-1; it reads DIQMTQSTSSLSASLGDRVTISC. Cysteine 23 and cysteine 88 are joined by a disulfide. The segment at 24–34 is complementarity-determining-1; sequence RASQDISNYLN. Residues 35 to 49 are framework-2; sequence WYQQKPDGTVKLLIY. Positions 50–56 are complementarity-determining-2; the sequence is YTSRLHS. The segment at 57–88 is framework-3; it reads GVPSRFSGSGSGTDYSLTISNLEQEDIATYFC. The complementarity-determining-3 stretch occupies residues 89-97; that stretch reads QQGYMLPRT. The framework-4 stretch occupies residues 98 to 108; the sequence is FGGGTKLEIKR.

This Mus musculus (Mouse) protein is Ig kappa chain V-V region HP 123E6.